Reading from the N-terminus, the 1823-residue chain is Bromodomain-containing protein DDB_G0280777 (1823 aa).

2 disordered regions span residues 44-83 and 200-281; these read DNNN…EEDE and LKQT…RTTS. Residues 65–77 show a composition bias toward basic and acidic residues; that stretch reads SNKEEEKEEKEEK. Basic residues predominate over residues 210–224; it reads KRRNQQHQNLLKKQK. Over residues 225 to 250 the composition is skewed to basic and acidic residues; the sequence is IQKEKEEREQKEKEQKEKEQKEKEEQ. Residues 251 to 262 are compositionally biased toward low complexity; that stretch reads QQQLFLLQQQQQ. One can recognise a Bromo domain in the interval 306–413; it reads EAQEEMYDQL…KKSKDLMKNV (108 aa). Disordered regions lie at residues 429–654, 753–781, 855–886, 949–993, 1055–1079, 1190–1386, 1453–1477, and 1679–1823; these read ENKN…EEQT, NCNN…NNSL, INDN…NNKP, NSSK…DEDF, LPNN…PPPS, IDPK…IQAS, QLQQ…QTPQ, and QQQQ…QKKQ. 4 stretches are compositionally biased toward low complexity: residues 432 to 486, 494 to 511, 520 to 555, and 570 to 579; these read NNNN…NTPL, CSPS…TPQS, QQQQ…ISPR, and SSSSLSSSSL. The segment covering 580–590 has biased composition (polar residues); it reads ALNSQNENGVN. Basic and acidic residues predominate over residues 601-614; it reads MESEESTNVKKEEN. Acidic residues predominate over residues 631–643; that stretch reads EGEEQQEQEDEEQ. Low complexity-rich tracts occupy residues 753 to 779, 863 to 884, 949 to 958, 1055 to 1071, and 1205 to 1378; these read NCNN…NNNN, NNNN…NNNN, NSSKSNNNSN, and LPNN…TTQL. Residues 1679–1705 show a composition bias toward low complexity; the sequence is QQQQPQQQQQQPQQQPQQQPQQQQQPQ. 2 stretches are compositionally biased toward basic and acidic residues: residues 1716–1737 and 1744–1755; these read PKEK…EKDR and KTESKKESKKSL. Low complexity-rich tracts occupy residues 1756-1767 and 1789-1806; these read NDSSNSDINTSV and SSKQ…TQDS. The span at 1813–1823 shows a compositional bias: basic residues; that stretch reads KKKRGRPQKKQ.

The polypeptide is Bromodomain-containing protein DDB_G0280777 (Dictyostelium discoideum (Social amoeba)).